Consider the following 961-residue polypeptide: Phosphofurin acidic cluster sorting protein 1 (961 aa).

The segment covering 1 to 19 (MAERGGAGGGPGGAGGGSS) has biased composition (gly residues). 2 disordered regions span residues 1–70 (MAER…SSST) and 76–95 (VAVA…RTPA). Alanine 2 bears the N-acetylalanine mark. A compositionally biased stretch (low complexity) spans 20–30 (QRGSGVAQSPQ). Position 28 is a phosphoserine (serine 28). Residues 31–46 (QQPPQQPSQPQQPTPP) show a composition bias toward pro residues. A Phosphothreonine modification is found at threonine 44. The span at 51-70 (ATSSSSSTSAAAASSSSSST) shows a compositional bias: low complexity. Residue tyrosine 249 is modified to Phosphotyrosine. Residues 260-271 (GIKSKLSDRSPD) are compositionally biased toward basic and acidic residues. Disordered regions lie at residues 260–297 (GIKS…LHGQ) and 375–426 (NPSD…GKDT). Acidic residues predominate over residues 274–291 (NYSEEEEESFSSEQEGSD). Residues 351-375 (HVSREQIREVEEDLDELYDSLEMYN) adopt a coiled-coil conformation. Phosphoserine occurs at positions 377 and 379. Residues 404-426 (MSQSSSQTEIGSLNSKGSLGKDT) are compositionally biased toward polar residues. A phosphoserine mark is found at serine 428 and serine 493. Disordered stretches follow at residues 475–540 (EKVK…HSTQ) and 758–802 (SPST…SMSS). Residue threonine 502 is modified to Phosphothreonine. Phosphoserine occurs at positions 517, 526, 527, 529, and 532. The span at 768 to 802 (SPVVSLTVPSTSPPSSSGLSRDATATPPSSPSMSS) shows a compositional bias: low complexity.

It belongs to the PACS family. Associates with AP-1 and AP-3 but not with AP-2 complexes. Interacts with FURIN. Forms a ternary complex with furin and AP-1. Interacts with PKD2 (via acidic region). Interacts with SORL1. Interacts with WDR37.

It localises to the golgi apparatus. The protein resides in the trans-Golgi network. In terms of biological role, coat protein that is involved in the localization of trans-Golgi network (TGN) membrane proteins that contain acidic cluster sorting motifs. Controls the endosome-to-Golgi trafficking of furin and mannose-6-phosphate receptor by connecting the acidic-cluster-containing cytoplasmic domain of these molecules with the adapter-protein complex-1 (AP-1) of endosomal clathrin-coated membrane pits. Required for normal ER Ca2+ handling in lymphocytes. Together with WDR37, it plays an essential role in lymphocyte development, quiescence and survival. Required for stabilizing peripheral lymphocyte populations. This Rattus norvegicus (Rat) protein is Phosphofurin acidic cluster sorting protein 1 (Pacs1).